Reading from the N-terminus, the 69-residue chain is U-Asilidin(12)-Dg3b (69 aa).

Positions 1-19 are cleaved as a signal peptide; that stretch reads MRFLNIFLFFAVMIAFVSA. Positions 20-33 are excised as a propeptide; the sequence is SPVLEEEEIDIEPR. 3 disulfide bridges follow: cysteine 36-cysteine 59, cysteine 45-cysteine 65, and cysteine 49-cysteine 67.

The protein belongs to the asilidin-12 family. As to expression, expressed by the venom gland.

The protein resides in the secreted. Functionally, the recombinant peptide moderately increases Kv11.1/KCNH2/ERG1 currents and shifts the voltage-dependence of the channel activation to hyperpolarised potentials. In vivo, induces neurotoxic effects when injected into insects (tested on L.cuprina and A.domesticus). The protein is U-Asilidin(12)-Dg3b of Dolopus genitalis (Giant Australian assassin fly).